The following is a 643-amino-acid chain: Threonine--tRNA ligase (643 aa).

Residues 1–61 form the TGS domain; sequence MPIITLPDGA…SVNANINIIT (61 aa). The interval 242-533 is catalytic; the sequence is DHRKIGKKLD…LIEEYEGKFP (292 aa). C333, H384, and H510 together coordinate Zn(2+).

The protein belongs to the class-II aminoacyl-tRNA synthetase family. In terms of assembly, homodimer. The cofactor is Zn(2+).

It localises to the cytoplasm. The catalysed reaction is tRNA(Thr) + L-threonine + ATP = L-threonyl-tRNA(Thr) + AMP + diphosphate + H(+). In terms of biological role, catalyzes the attachment of threonine to tRNA(Thr) in a two-step reaction: L-threonine is first activated by ATP to form Thr-AMP and then transferred to the acceptor end of tRNA(Thr). Also edits incorrectly charged L-seryl-tRNA(Thr). The chain is Threonine--tRNA ligase from Prochlorococcus marinus (strain SARG / CCMP1375 / SS120).